Consider the following 176-residue polypeptide: Probable chorismate pyruvate-lyase (176 aa).

Substrate-binding residues include R70, L108, and E166.

The protein belongs to the UbiC family.

It is found in the cytoplasm. It carries out the reaction chorismate = 4-hydroxybenzoate + pyruvate. The protein operates within cofactor biosynthesis; ubiquinone biosynthesis. Functionally, removes the pyruvyl group from chorismate, with concomitant aromatization of the ring, to provide 4-hydroxybenzoate (4HB) for the ubiquinone pathway. The chain is Probable chorismate pyruvate-lyase from Dechloromonas aromatica (strain RCB).